The following is a 369-amino-acid chain: Anhydro-N-acetylmuramic acid kinase (369 aa).

12–19 (GTSMDGVD) contributes to the ATP binding site.

This sequence belongs to the anhydro-N-acetylmuramic acid kinase family.

It catalyses the reaction 1,6-anhydro-N-acetyl-beta-muramate + ATP + H2O = N-acetyl-D-muramate 6-phosphate + ADP + H(+). It participates in amino-sugar metabolism; 1,6-anhydro-N-acetylmuramate degradation. The protein operates within cell wall biogenesis; peptidoglycan recycling. Functionally, catalyzes the specific phosphorylation of 1,6-anhydro-N-acetylmuramic acid (anhMurNAc) with the simultaneous cleavage of the 1,6-anhydro ring, generating MurNAc-6-P. Is required for the utilization of anhMurNAc either imported from the medium or derived from its own cell wall murein, and thus plays a role in cell wall recycling. This Shewanella sp. (strain MR-4) protein is Anhydro-N-acetylmuramic acid kinase.